Reading from the N-terminus, the 472-residue chain is MANRLNNDFQFIDVGRQDPEKKPARTRAKQFAEIYEPYKPQDAAAQAHRCLHCGNPYCEWKCPVHNYIPNWLQLVSEGNILEAAELSHRTNSLPEVCGRVCPQDRLCEGDCTLNDGFGAVTIGSVEKYITDTAFAMGWRPDMSKVTWTDKKVAIIGAGPAGLGCADILVRNGVKPVVFDKYPEIGGLLTFGIPEFKLEKTVMERRRAVFEEMGVEFCLGVEIGRDMPFEQLLEEYDAVFLGMGTYKYMEGGFPGEDLPGVHKALDYLVANVNHCLGFETDPADYVSLEGQRVVVLGGGDTAMDCNRTAIRQGAASVTCAYRRDEDNMPGSRKEVANAREEGVDFLFNRQPVAVIGEDRVEGIKVVRTRLGEPDENGRQRPEVVPGSEEVVPADAVVIAFGFQPSPAPWFETVGIELDEKGRVKAPEEGAYAFQTTNEKIFAGGDMVRGSDLVVTAVFEGRQAGEGILDYLDV.

The 32-residue stretch at 41 to 72 folds into the 4Fe-4S ferredoxin-type domain; sequence QDAAAQAHRCLHCGNPYCEWKCPVHNYIPNWL. C50, C53, C58, and C62 together coordinate [4Fe-4S] cluster.

The cofactor is [4Fe-4S] cluster.

The enzyme catalyses 2 L-glutamate + NADP(+) = L-glutamine + 2-oxoglutarate + NADPH + H(+). It participates in amino-acid biosynthesis; L-glutamate biosynthesis via GLT pathway; L-glutamate from 2-oxoglutarate and L-glutamine (NADP(+) route): step 1/1. The protein operates within energy metabolism; nitrogen metabolism. In terms of biological role, catalyzes the conversion of L-glutamine and 2-oxoglutarate into two molecules of L-glutamate. This chain is Glutamate synthase [NADPH] small chain, found in Halomonas elongata (strain ATCC 33173 / DSM 2581 / NBRC 15536 / NCIMB 2198 / 1H9).